Consider the following 396-residue polypeptide: Elongation factor Tu (396 aa).

Residues 10 to 205 enclose the tr-type G domain; it reads KPHVNIGTIG…AVDESIPDPV (196 aa). The tract at residues 19-26 is G1; that stretch reads GHVDHGKT. 19–26 contributes to the GTP binding site; sequence GHVDHGKT. Position 26 (threonine 26) interacts with Mg(2+). The G2 stretch occupies residues 62 to 66; the sequence is GITIN. The G3 stretch occupies residues 83–86; sequence DAPG. Residues 83-87 and 138-141 each bind GTP; these read DAPGH and NKAD. The interval 138 to 141 is G4; it reads NKAD. Positions 175-177 are G5; that stretch reads SAL.

Belongs to the TRAFAC class translation factor GTPase superfamily. Classic translation factor GTPase family. EF-Tu/EF-1A subfamily. As to quaternary structure, monomer.

It localises to the cytoplasm. The catalysed reaction is GTP + H2O = GDP + phosphate + H(+). GTP hydrolase that promotes the GTP-dependent binding of aminoacyl-tRNA to the A-site of ribosomes during protein biosynthesis. The polypeptide is Elongation factor Tu (Mycolicibacterium vanbaalenii (strain DSM 7251 / JCM 13017 / BCRC 16820 / KCTC 9966 / NRRL B-24157 / PYR-1) (Mycobacterium vanbaalenii)).